The sequence spans 394 residues: Na(+)/H(+) antiporter NhaA (394 aa).

11 consecutive transmembrane segments (helical) span residues 14–34, 59–79, 95–115, 125–145, 155–175, 177–197, 204–224, 258–278, 292–312, 328–348, and 362–382; these read AGGILLLIAALLAMLCANSVF, LLMWINDGFMAVFFILVGMEV, IFPAFAAIGGMVVPALIYWFI, GWAIPMATDIAFALGIVALLS, FLLALAIIDDIGAIIVIALFF, NELSMLALIIASIAIMILITM, GIIHYVIVGTILWASVLKSGV, WCAFAILPLFAFSNAGVSLAG, ITLGLLIGKPVGVFSFCYLAV, VFAIAVLCGIGFTMSVFIAGL, and LSRLGILIGTSIAAIVGYILL.

The protein belongs to the NhaA Na(+)/H(+) (TC 2.A.33) antiporter family.

The protein resides in the cell inner membrane. It catalyses the reaction Na(+)(in) + 2 H(+)(out) = Na(+)(out) + 2 H(+)(in). Its function is as follows. Na(+)/H(+) antiporter that extrudes sodium in exchange for external protons. This Haemophilus ducreyi (strain 35000HP / ATCC 700724) protein is Na(+)/H(+) antiporter NhaA.